The sequence spans 212 residues: Cytidylate kinase (212 aa).

9-17 (GPAAAGKGT) contacts ATP.

This sequence belongs to the cytidylate kinase family. Type 1 subfamily.

It localises to the cytoplasm. It carries out the reaction CMP + ATP = CDP + ADP. It catalyses the reaction dCMP + ATP = dCDP + ADP. The sequence is that of Cytidylate kinase from Sinorhizobium medicae (strain WSM419) (Ensifer medicae).